Consider the following 289-residue polypeptide: 4-diphosphocytidyl-2-C-methyl-D-erythritol kinase (289 aa).

The active site involves lysine 11. 93–103 (PLAAGLAGGSA) contributes to the ATP binding site. Aspartate 135 is a catalytic residue.

It belongs to the GHMP kinase family. IspE subfamily.

The catalysed reaction is 4-CDP-2-C-methyl-D-erythritol + ATP = 4-CDP-2-C-methyl-D-erythritol 2-phosphate + ADP + H(+). It participates in isoprenoid biosynthesis; isopentenyl diphosphate biosynthesis via DXP pathway; isopentenyl diphosphate from 1-deoxy-D-xylulose 5-phosphate: step 3/6. In terms of biological role, catalyzes the phosphorylation of the position 2 hydroxy group of 4-diphosphocytidyl-2C-methyl-D-erythritol. The polypeptide is 4-diphosphocytidyl-2-C-methyl-D-erythritol kinase (Thermoanaerobacter sp. (strain X514)).